A 448-amino-acid chain; its full sequence is Methylenetetrahydrofolate--tRNA-(uracil-5-)-methyltransferase TrmFO (448 aa).

13 to 18 (GAGLAG) is an FAD binding site.

It belongs to the MnmG family. TrmFO subfamily. FAD serves as cofactor.

It is found in the cytoplasm. The enzyme catalyses uridine(54) in tRNA + (6R)-5,10-methylene-5,6,7,8-tetrahydrofolate + NADH + H(+) = 5-methyluridine(54) in tRNA + (6S)-5,6,7,8-tetrahydrofolate + NAD(+). It catalyses the reaction uridine(54) in tRNA + (6R)-5,10-methylene-5,6,7,8-tetrahydrofolate + NADPH + H(+) = 5-methyluridine(54) in tRNA + (6S)-5,6,7,8-tetrahydrofolate + NADP(+). Catalyzes the folate-dependent formation of 5-methyl-uridine at position 54 (M-5-U54) in all tRNAs. This Streptococcus pyogenes serotype M3 (strain ATCC BAA-595 / MGAS315) protein is Methylenetetrahydrofolate--tRNA-(uracil-5-)-methyltransferase TrmFO.